The chain runs to 343 residues: MDKLDQLVQQAAAEFAAAADGVQLEQAKARYLGKTGALTERLKGLGKLAAEERRVAGAEINRAKDAIEAALEARRQALREAVLVAQLAAEALDVTLPGRGAAQGGLHPVSRTLERIEALFRSIGFVVADGPEVETDWHNFTALNTPENHPARSMHDTFYLEGHEDVLLRTHTSPVQIRTMLDHVARYGDRESMPEIRVIVPGRVYRVDSDATHSPMFHQVEGLWVGESVSFADLKGVIADFLRKFFETEELQVRFRPSFFPFTEPSAEIDVAFMSGALKGRWLEIAGCGMVHPNVLRFGGIDPERYTGFAFGMGPDRLTMLRYGVNDLRLFFEGDLRFLSQFR.

A Mg(2+)-binding site is contributed by Glu264.

This sequence belongs to the class-II aminoacyl-tRNA synthetase family. Phe-tRNA synthetase alpha subunit type 1 subfamily. As to quaternary structure, tetramer of two alpha and two beta subunits. Mg(2+) is required as a cofactor.

The protein resides in the cytoplasm. It catalyses the reaction tRNA(Phe) + L-phenylalanine + ATP = L-phenylalanyl-tRNA(Phe) + AMP + diphosphate + H(+). The sequence is that of Phenylalanine--tRNA ligase alpha subunit from Aromatoleum aromaticum (strain DSM 19018 / LMG 30748 / EbN1) (Azoarcus sp. (strain EbN1)).